The chain runs to 713 residues: MVTNNGDGEHLGIRRNGNLRHPSNNMKIPRRAQSTVLNSNPFYSRKYSMSTLTPRDICRSVDSRVFVDMSSPNFQTLEDPHRDEIINSVRLNYLNSSKRSSVSHGNEAIPRVNPTKNSSASTIAAANVDSDDDETNLSSAGGDITHDIYKLVKAEDPKRLRRPRSMENVTPKIEHHTKLSSASGLNVPGGFRREFIVNKKRQEHQLNDSASSDFTSHESDSINQSSPSSNQDIDKVPFLTRNFLEFLYVFGHFAGESFEDDFIPDSSNMMIRGEDERSALLSRPDHMKVLPSAKGTTSTKKVFLILLKSFIGTGVLFLPNAFHNGGLFFSVSMLAFFGIYSYWCYYILVQAKSSCGVSSFGDIGLKLYGPWMRIIILFSLVITQVGFSGAYMIFTAKNLQAFLDNVFHVGVLPLSYLMVFQTIIFIPLSFIRNISKLSLPSLLANFFIMAGLVIVIIFTAKRLFFDLMGTPAMGVVYGLNADRWTLFIGTAIFAFEGIGLIIPVQDSMRNPEKFPLVLALVILTATILFISIATLGYLAYGSNVQTVILLNLPQSNIFVNLIQLFYSIAIMLSTPLQLFPAIKIIENKFFPKFTKIYVKHDDLTTRVELRPNSGKLNWKIKWLKNFIRSIIVIIVVSIAYFGSDNLDKFVSVIGSLACIPLVYIYPSMLHLRGNSLPETKGEFWRFKPMLDTILIFFGIASMLYTSYQSIFGV.

The interval 1 to 33 (MVTNNGDGEHLGIRRNGNLRHPSNNMKIPRRAQ) is disordered. Over 1-242 (MVTNNGDGEH…IDKVPFLTRN (242 aa)) the chain is Vacuolar. Positions 21-33 (HPSNNMKIPRRAQ) are enriched in polar residues. At serine 88 the chain carries Phosphoserine. The tract at residues 99 to 121 (RSSVSHGNEAIPRVNPTKNSSAS) is disordered. Phosphoserine is present on residues serine 130 and serine 165. Residues 200 to 233 (KRQEHQLNDSASSDFTSHESDSINQSSPSSNQDI) form a disordered region. Over residues 221–231 (SINQSSPSSNQ) the composition is skewed to low complexity. A helical membrane pass occupies residues 243–263 (FLEFLYVFGHFAGESFEDDFI). At 264–301 (PDSSNMMIRGEDERSALLSRPDHMKVLPSAKGTTSTKK) the chain is on the cytoplasmic side. The helical transmembrane segment at 302–322 (VFLILLKSFIGTGVLFLPNAF) threads the bilayer. The Vacuolar segment spans residues 323–326 (HNGG). A helical membrane pass occupies residues 327–347 (LFFSVSMLAFFGIYSYWCYYI). Over 348–373 (LVQAKSSCGVSSFGDIGLKLYGPWMR) the chain is Cytoplasmic. The helical transmembrane segment at 374 to 394 (IIILFSLVITQVGFSGAYMIF) threads the bilayer. Over 395-410 (TAKNLQAFLDNVFHVG) the chain is Vacuolar. A helical membrane pass occupies residues 411–431 (VLPLSYLMVFQTIIFIPLSFI). The Cytoplasmic segment spans residues 432 to 438 (RNISKLS). Residues 439–459 (LPSLLANFFIMAGLVIVIIFT) traverse the membrane as a helical segment. Residues 460–483 (AKRLFFDLMGTPAMGVVYGLNADR) are Vacuolar-facing. Residues 484–504 (WTLFIGTAIFAFEGIGLIIPV) traverse the membrane as a helical segment. Residues 505–515 (QDSMRNPEKFP) lie on the Cytoplasmic side of the membrane. Residues 516–536 (LVLALVILTATILFISIATLG) form a helical membrane-spanning segment. Topologically, residues 537-561 (YLAYGSNVQTVILLNLPQSNIFVNL) are vacuolar. A helical transmembrane segment spans residues 562-582 (IQLFYSIAIMLSTPLQLFPAI). Residues 583–621 (KIIENKFFPKFTKIYVKHDDLTTRVELRPNSGKLNWKIK) are Cytoplasmic-facing. The chain crosses the membrane as a helical span at residues 622 to 642 (WLKNFIRSIIVIIVVSIAYFG). The Vacuolar portion of the chain corresponds to 643-648 (SDNLDK). A helical membrane pass occupies residues 649-669 (FVSVIGSLACIPLVYIYPSML). Topologically, residues 670-692 (HLRGNSLPETKGEFWRFKPMLDT) are cytoplasmic. A helical membrane pass occupies residues 693–711 (ILIFFGIASMLYTSYQSIF). Over 712–713 (GV) the chain is Vacuolar.

Belongs to the amino acid/polyamine transporter 2 family.

It localises to the vacuole membrane. Its function is as follows. Involved in amino acid efflux from the vacuole to the cytoplasm. Capable of transporting large neutral amino acids including tyrosine, glutamine, asparagine, isoleucine and leucine. This chain is Vacuolar amino acid transporter 4 (AVT4), found in Saccharomyces cerevisiae (strain ATCC 204508 / S288c) (Baker's yeast).